The chain runs to 150 residues: MHIARFCLLSSMAVLALSAGYVSGAVIEIPDEILDSARFISLYSDGLRQKRQLNLSGPGSEHAGTIRLDGQRNIFDNGRTRVDGTGSYQLDYARGMKPIHGAGLGAEVNHNIWRGRGGQSLDLYGGATRQFNFGNRPNEWGAHGGIRYNF.

Residues 1 to 19 (MHIARFCLLSSMAVLALSA) form the signal peptide.

The protein resides in the secreted. In terms of biological role, has antibacterial activity in vitro. In Riptortus clavatus (Bean bug), this protein is Probable antibacterial peptide.